We begin with the raw amino-acid sequence, 715 residues long: Fatty acid oxidation complex subunit alpha (715 aa).

An enoyl-CoA hydratase region spans residues 1–190 (MTTTSAFMLN…KAGLVDDVVP (190 aa)). The segment at 306–715 (GPLNSVGILG…WTNGETDQGN (410 aa)) is 3-hydroxyacyl-CoA dehydrogenase.

It in the N-terminal section; belongs to the enoyl-CoA hydratase/isomerase family. The protein in the central section; belongs to the 3-hydroxyacyl-CoA dehydrogenase family. Heterotetramer of two alpha chains (FadJ) and two beta chains (FadI).

It localises to the cytoplasm. The catalysed reaction is a (3S)-3-hydroxyacyl-CoA = a (2E)-enoyl-CoA + H2O. It carries out the reaction a 4-saturated-(3S)-3-hydroxyacyl-CoA = a (3E)-enoyl-CoA + H2O. The enzyme catalyses a (3S)-3-hydroxyacyl-CoA + NAD(+) = a 3-oxoacyl-CoA + NADH + H(+). It catalyses the reaction (3S)-3-hydroxybutanoyl-CoA = (3R)-3-hydroxybutanoyl-CoA. Its pathway is lipid metabolism; fatty acid beta-oxidation. Catalyzes the formation of a hydroxyacyl-CoA by addition of water on enoyl-CoA. Also exhibits 3-hydroxyacyl-CoA epimerase and 3-hydroxyacyl-CoA dehydrogenase activities. This Salmonella gallinarum (strain 287/91 / NCTC 13346) protein is Fatty acid oxidation complex subunit alpha.